The primary structure comprises 451 residues: Jacalin-related lectin 35 (451 aa).

Residue alanine 2 is modified to N-acetylalanine. 3 Jacalin-type lectin domains span residues 2-143 (AKKL…YIIP), 156-297 (LTKL…YIIP), and 306-448 (SNTI…NVAP).

The protein belongs to the jacalin lectin family. In terms of assembly, component of the PYK10 complex, at least composed of PYK10/BGLU23, BGLU21, BGLU22, JAL22, JAL23, PBP1/JAL30, PBP2/JAL31, JAL32, JAL33, JAL34, JAL35, GLL22 and GLL23.

This is Jacalin-related lectin 35 (JAL35) from Arabidopsis thaliana (Mouse-ear cress).